The chain runs to 250 residues: 7-cyano-7-deazaguanine synthase (250 aa).

Residue 28 to 38 (LSGGLDSATCV) participates in ATP binding. Residues Cys213, Cys226, Cys229, and Cys232 each contribute to the Zn(2+) site.

This sequence belongs to the QueC family. Requires Zn(2+) as cofactor.

It catalyses the reaction 7-carboxy-7-deazaguanine + NH4(+) + ATP = 7-cyano-7-deazaguanine + ADP + phosphate + H2O + H(+). It functions in the pathway purine metabolism; 7-cyano-7-deazaguanine biosynthesis. Its function is as follows. Catalyzes the ATP-dependent conversion of 7-carboxy-7-deazaguanine (CDG) to 7-cyano-7-deazaguanine (preQ(0)). This is 7-cyano-7-deazaguanine synthase from Rhodopirellula baltica (strain DSM 10527 / NCIMB 13988 / SH1).